The primary structure comprises 272 residues: 3-methyl-2-oxobutanoate hydroxymethyltransferase (272 aa).

Positions 54 and 93 each coordinate Mg(2+). 3-methyl-2-oxobutanoate contacts are provided by residues 54-55 (DS), aspartate 93, and lysine 123. Glutamate 125 is a binding site for Mg(2+). The Proton acceptor role is filled by glutamate 190.

It belongs to the PanB family. Homodecamer; pentamer of dimers. The cofactor is Mg(2+).

It is found in the cytoplasm. It carries out the reaction 3-methyl-2-oxobutanoate + (6R)-5,10-methylene-5,6,7,8-tetrahydrofolate + H2O = 2-dehydropantoate + (6S)-5,6,7,8-tetrahydrofolate. The protein operates within cofactor biosynthesis; (R)-pantothenate biosynthesis; (R)-pantoate from 3-methyl-2-oxobutanoate: step 1/2. Functionally, catalyzes the reversible reaction in which hydroxymethyl group from 5,10-methylenetetrahydrofolate is transferred onto alpha-ketoisovalerate to form ketopantoate. In Tropheryma whipplei (strain Twist) (Whipple's bacillus), this protein is 3-methyl-2-oxobutanoate hydroxymethyltransferase.